Reading from the N-terminus, the 265-residue chain is Palmitoyltransferase ZDHHC21 (265 aa).

Topologically, residues Met1–Cys16 are cytoplasmic. Residues Met17–Phe37 form a helical membrane-spanning segment. The Extracellular portion of the chain corresponds to Pro38–His44. Residues Ile45–Val65 traverse the membrane as a helical segment. The Cytoplasmic portion of the chain corresponds to Arg66 to Trp133. Residues Glu90–Phe140 form the DHHC domain. The S-palmitoyl cysteine intermediate role is filled by Cys120. Residues Leu134–Phe154 traverse the membrane as a helical segment. At Cys155–Phe185 the chain is on the extracellular side. Residues Met186 to Ile206 form a helical membrane-spanning segment. At Thr207–Val265 the chain is on the cytoplasmic side.

The protein belongs to the DHHC palmitoyltransferase family.

The protein localises to the golgi apparatus membrane. It is found in the golgi apparatus. Its subcellular location is the cis-Golgi network membrane. It localises to the cell membrane. It catalyses the reaction L-cysteinyl-[protein] + hexadecanoyl-CoA = S-hexadecanoyl-L-cysteinyl-[protein] + CoA. In terms of biological role, palmitoyltransferase that catalyzes the addition of palmitate onto various protein substrates. Palmitoylates sex steroid hormone receptors, including ESR1, PGR and AR, thereby regulating their targeting to the plasma membrane. This affects rapid intracellular signaling by sex hormones via ERK and AKT kinases and the generation of cAMP, but does not affect that mediated by their nuclear receptor. Palmitoylates FYN, regulates its localization in hair follicles and plays a key role in epidermal homeostasis and hair follicle differentiation. Through the palmitoylation of PLCB1 and the regulation of PLCB1 downstream signaling may indirectly regulate the function of the endothelial barrier and the adhesion of leukocytes to the endothelium. Also has a palmitoyltransferase activity toward ADRA1D, positively regulating its activity and expression and may thereby play a role in vascular contraction. May also palmitoylate eNOS and LCK. This Bos taurus (Bovine) protein is Palmitoyltransferase ZDHHC21.